A 195-amino-acid chain; its full sequence is E3 ubiquitin-protein ligase ZNRF1 (195 aa).

The span at 1-10 (MGGKQSSASR) shows a compositional bias: polar residues. The segment at 1–37 (MGGKQSSASRSRAPFPGVSSDDSAVPPSSNFGHFRGG) is disordered. Gly-2 carries the N-myristoyl glycine lipid modification. A compositionally biased stretch (low complexity) spans 18-29 (VSSDDSAVPPSS). An RING-type; atypical zinc finger spans residues 152 to 193 (CVICLEELSQGDTIARLPCLCIYHKSCIDSWFEVNRCCPEHP).

Its subcellular location is the endosome. The protein localises to the lysosome. It localises to the membrane. The catalysed reaction is S-ubiquitinyl-[E2 ubiquitin-conjugating enzyme]-L-cysteine + [acceptor protein]-L-lysine = [E2 ubiquitin-conjugating enzyme]-L-cysteine + N(6)-ubiquitinyl-[acceptor protein]-L-lysine.. The protein operates within protein modification; protein ubiquitination. E3 ubiquitin-protein ligase that plays a role in neuron cells differentiation. Plays a role in the establishment and maintenance of neuronal transmission and plasticity. The chain is E3 ubiquitin-protein ligase ZNRF1 (znrf1) from Xenopus laevis (African clawed frog).